The chain runs to 292 residues: MPWLQVRLAISPEQAETYEDAFLEVGAVSVTFMDAEDQPIFEPELNTTPLWSHTHLLALFEDGTDAAAVLAHMELLTGGPLPEHHSEVIEDQDWERSWMDNFQPMRFGQRLWIVPSWHAAPEPDAVNLLLDPGLAFGTGTHPTTALCLEWLDGQDLTDSHVLDFGCGSGILAIAALLLGAKEAVGTDIDVQALEASRDNAGRNNIPEGKFPLYLPEQLPQVQADVLVANILAGPLVSLAPQLSSLVKPGGRLALSGILAEQGEDVAAAYAKDFELDPIANRDGWVRISGRRR.

Residues Thr144, Gly165, Asp187, and Asn229 each coordinate S-adenosyl-L-methionine.

It belongs to the methyltransferase superfamily. PrmA family.

The protein resides in the cytoplasm. It catalyses the reaction L-lysyl-[protein] + 3 S-adenosyl-L-methionine = N(6),N(6),N(6)-trimethyl-L-lysyl-[protein] + 3 S-adenosyl-L-homocysteine + 3 H(+). In terms of biological role, methylates ribosomal protein L11. The protein is Ribosomal protein L11 methyltransferase of Pseudomonas fluorescens (strain SBW25).